We begin with the raw amino-acid sequence, 102 residues long: Large ribosomal subunit protein uL23c (102 aa).

The protein belongs to the universal ribosomal protein uL23 family. As to quaternary structure, part of the 50S ribosomal subunit.

The protein localises to the plastid. The protein resides in the chloroplast. Binds to 23S rRNA. The protein is Large ribosomal subunit protein uL23c (rpl23) of Phaeodactylum tricornutum (strain CCAP 1055/1).